The sequence spans 89 residues: Small ribosomal subunit protein uS15 (89 aa).

The protein belongs to the universal ribosomal protein uS15 family. Part of the 30S ribosomal subunit. Forms a bridge to the 50S subunit in the 70S ribosome, contacting the 23S rRNA.

One of the primary rRNA binding proteins, it binds directly to 16S rRNA where it helps nucleate assembly of the platform of the 30S subunit by binding and bridging several RNA helices of the 16S rRNA. In terms of biological role, forms an intersubunit bridge (bridge B4) with the 23S rRNA of the 50S subunit in the ribosome. This is Small ribosomal subunit protein uS15 from Bifidobacterium adolescentis (strain ATCC 15703 / DSM 20083 / NCTC 11814 / E194a).